A 247-amino-acid polypeptide reads, in one-letter code: Protein ABHD14A (247 aa).

A helical; Signal-anchor for type II membrane protein transmembrane segment spans residues 11 to 31 (AALLGLGLLLVFLLYMGLPGP). N-linked (GlcNAc...) asparagine glycosylation occurs at Asn43. Residues Ser147, Asp198, and His225 each act as charge relay system in the active site.

This sequence belongs to the AB hydrolase superfamily. ABHD14 family. Widely expressed. Higher expression is detected in brain, kidney, heart, testis, ovary and uterus.

The protein resides in the cytoplasm. The protein localises to the membrane. In terms of biological role, possible role in granule neuron development. The polypeptide is Protein ABHD14A (Mus musculus (Mouse)).